Here is an 864-residue protein sequence, read N- to C-terminus: Leukocyte tyrosine kinase receptor (864 aa).

Residues 1–16 form the signal peptide; it reads MGCWGQLLVWFGAAGA. Over 17–424 the chain is Extracellular; the sequence is ILCSSPGSQE…CMDLHKPPGP (408 aa). Low complexity predominate over residues 30-40; sequence RSSPLPLASPS. The tract at residues 30 to 64 is disordered; it reads RSSPLPLASPSPRDPKVSAPPSILEPASPLNSPGT. 2 disulfide bridges follow: cysteine 73–cysteine 86 and cysteine 168–cysteine 179. A disordered region spans residues 239-297; the sequence is YLRPRDRGRTQASPEKLENRSEAPGSGGRGGAAGGGGGWTSRAPSPQAGRSLQEGAEGG. Positions 241–259 are enriched in basic and acidic residues; sequence RPRDRGRTQASPEKLENRS. The N-linked (GlcNAc...) asparagine glycan is linked to asparagine 257. Gly residues predominate over residues 263–277; that stretch reads GSGGRGGAAGGGGGW. A disulfide bridge connects residues cysteine 300 and cysteine 322. N-linked (GlcNAc...) asparagine glycosylation is found at asparagine 380 and asparagine 412. The chain crosses the membrane as a helical span at residues 425–449; the sequence is LVLMVAVVATSTLSLLMVCGVLILV. At 450-864 the chain is on the cytoplasmic side; sequence KQKKWQGLQE…QNLWNPTYRS (415 aa). The region spanning 510 to 786 is the Protein kinase domain; the sequence is VTLLRALGHG…LQYCTQDPDV (277 aa). ATP is bound by residues 516-524 and lysine 544; that span reads LGHGAFGEV. Residue aspartate 643 is the Proton acceptor of the active site. The residue at position 676 (tyrosine 676) is a Phosphotyrosine; by autocatalysis. 2 disordered regions span residues 790–830 and 842–864; these read LLPM…KLKS and SGLK…TYRS. Residues 852–864 show a composition bias toward polar residues; sequence LQPQNLWNPTYRS.

This sequence belongs to the protein kinase superfamily. Tyr protein kinase family. Insulin receptor subfamily. Homodimer; homodimerizes following ligand-binding. Part of a complex including LTK, TNK2 and GRB2, in which GRB2 promotes LTK recruitment by TNK2. Post-translationally, phosphorylated at tyrosine residues by autocatalysis, which activates kinase activity. As to expression, expressed in non-hematopoietic cell lines and T- and B-cell lines.

It localises to the cell membrane. It catalyses the reaction L-tyrosyl-[protein] + ATP = O-phospho-L-tyrosyl-[protein] + ADP + H(+). With respect to regulation, activated by ligand-binding, leading to homodimerization and autophosphorylation. Receptor with a tyrosine-protein kinase activity. Following activation by ALKAL1 or ALKAL2 ligands at the cell surface, transduces an extracellular signal into an intracellular response. Ligand-binding to the extracellular domain induces tyrosine kinase activation, leading to activation of the mitogen-activated protein kinase (MAPK) pathway. Phosphorylates almost exclusively at the first tyrosine of the Y-x-x-x-Y-Y motif. The exact function of this protein is not known; studies with chimeric proteins demonstrate its ability to promote growth and specifically neurite outgrowth, and cell survival. Involved in regulation of the secretory pathway involving endoplasmic reticulum (ER) export sites (ERESs) and ER to Golgi transport. The sequence is that of Leukocyte tyrosine kinase receptor from Homo sapiens (Human).